The sequence spans 687 residues: Protein-glutamine gamma-glutamyltransferase 2 (687 aa).

The residue at position 2 (Ala-2) is an N-acetylalanine. Ser-60 carries the post-translational modification Phosphoserine. 2 disulfides stabilise this stretch: Cys-230–Cys-370 and Cys-370–Cys-371. Residues Cys-277, His-335, and Asp-358 contribute to the active site. Asn-398, Asp-400, Glu-437, Glu-447, and Glu-452 together coordinate Ca(2+). Position 468 is an N6-acetyllysine (Lys-468). 476 to 483 (RIRVGQSM) provides a ligand contact to GTP. A Ca(2+)-binding site is contributed by Glu-539. 580–583 (RDLY) contacts GTP. An Isoglutamyl lysine isopeptide (Gln-Lys) (interchain with K-?) cross-link involves residue Gln-633.

This sequence belongs to the transglutaminase superfamily. Transglutaminase family. As to quaternary structure, monomer. Interacts with phospholipase C; promoting alpha-1 adrenergic receptor signaling. Interacts with PLCD1. Homooligomer. It depends on Ca(2+) as a cofactor. Post-translationally, disulfide bond formation inactivates the calcium-dependent acyltransferase activity. Cys-370 can form disulfide bonds with both Cys-230 and Cys-371: formation of a disulfide bond between Cys-230 and Cys-370 facilitates formation of the disulfide between Cys-370 and Cys-371, which promotes inactivation of the acyltransferase activity. May also form interchain disulfids between Cys-230 and Cys-370. Ca(2+) protects against disulfide bond formation and inactivation. In terms of processing, auto-transglutaminated: Forms covalent cross-links mediated by transglutaminase between Gln-633 and the epsilon-amino group of a lysine residue of itself or HMGB1, forming homopolymers and heteropolymers, respectively. S-nitrosylated, leading to inactivation of the acyltransferase activity.

Its subcellular location is the cytoplasm. It is found in the cytosol. It localises to the nucleus. The protein localises to the chromosome. The protein resides in the secreted. Its subcellular location is the extracellular space. It is found in the extracellular matrix. It localises to the cell membrane. The protein localises to the mitochondrion. The protein resides in the perinuclear region. It carries out the reaction L-glutaminyl-[protein] + L-lysyl-[protein] = [protein]-L-lysyl-N(6)-5-L-glutamyl-[protein] + NH4(+). The enzyme catalyses L-glutaminyl-[protein] + serotonin = 5-serotonyl-L-glutamyl-[protein] + NH4(+). The catalysed reaction is L-glutaminyl-[protein] + dopamine = 5-dopaminyl-L-glutamyl-[protein] + NH4(+). It catalyses the reaction L-glutaminyl-[protein] + histamine = 5-histaminyl-L-glutamyl-[protein] + NH4(+). It carries out the reaction L-glutaminyl-[protein] + (R)-noradrenaline = 5-(R)-noradrenalinyl-L-glutamyl-[protein] + NH4(+). The enzyme catalyses L-glutaminyl-[protein] + H2O = L-glutamyl-[protein] + NH4(+). Acyltransferase activity is regulated by the binding of GTP and Ca(2+): inactivated by GTP, which stabilizes its closed structure, thereby obstructing the accessibility of substrates to the active sites. In contrast, Ca(2+) acts as a cofactor by inducing conformational change to the active open form. In absence of Ca(2+), Mg(2+) may bind Ca(2+)-binding sites, promoting GTP-binding and subsequent inhibition of the acyltransferase activity. Extracellularly reduced and activated by CLIC3. Specifically inhibited by compound VA4 ((S)-Benzyl (6-Acrylamido-1-(4-((5-(dimethylamino)naphthalen-1-yl)sulfonyl)piperazin-1-yl)-1-oxohexan-2-yl)carbamate), which specifically abolishes both the transamidation and GTP-binding activities. In terms of biological role, calcium-dependent acyltransferase that catalyzes the formation of covalent bonds between peptide-bound glutamine and various primary amines, such as gamma-amino group of peptide-bound lysine, or mono- and polyamines, thereby producing cross-linked or aminated proteins, respectively. Involved in many biological processes, such as bone development, angiogenesis, wound healing, cellular differentiation, chromatin modification and apoptosis. Acts as a protein-glutamine gamma-glutamyltransferase by mediating the cross-linking of proteins, such as ACO2, HSPB6, FN1, HMGB1, RAP1GDS1, SLC25A4/ANT1, SPP1 and WDR54. Under physiological conditions, the protein cross-linking activity is inhibited by GTP; inhibition is relieved by Ca(2+) in response to various stresses. When secreted, catalyzes cross-linking of proteins of the extracellular matrix, such as FN1 and SPP1 resulting in the formation of scaffolds. Plays a key role during apoptosis, both by (1) promoting the cross-linking of cytoskeletal proteins resulting in condensation of the cytoplasm, and by (2) mediating cross-linking proteins of the extracellular matrix, resulting in the irreversible formation of scaffolds that stabilize the integrity of the dying cells before their clearance by phagocytosis, thereby preventing the leakage of harmful intracellular components. In addition to protein cross-linking, can use different monoamine substrates to catalyze a vast array of protein post-translational modifications: mediates aminylation of serotonin, dopamine, noradrenaline or histamine into glutamine residues of target proteins to generate protein serotonylation, dopaminylation, noradrenalinylation or histaminylation, respectively. Mediates protein serotonylation of small GTPases during activation and aggregation of platelets, leading to constitutive activation of these GTPases. Plays a key role in chromatin organization by mediating serotonylation and dopaminylation of histone H3. Catalyzes serotonylation of 'Gln-5' of histone H3 (H3Q5ser) during serotonergic neuron differentiation, thereby facilitating transcription. Acts as a mediator of neurotransmission-independent role of nuclear dopamine in ventral tegmental area (VTA) neurons: catalyzes dopaminylation of 'Gln-5' of histone H3 (H3Q5dop), thereby regulating relapse-related transcriptional plasticity in the reward system. Regulates vein remodeling by mediating serotonylation and subsequent inactivation of ATP2A2/SERCA2. Also acts as a protein deamidase by mediating the side chain deamidation of specific glutamine residues of proteins to glutamate. Catalyzes specific deamidation of protein gliadin, a component of wheat gluten in the diet. May also act as an isopeptidase cleaving the previously formed cross-links. Also able to participate in signaling pathways independently of its acyltransferase activity: acts as a signal transducer in alpha-1 adrenergic receptor-mediated stimulation of phospholipase C-delta (PLCD) activity and is required for coupling alpha-1 adrenergic agonists to the stimulation of phosphoinositide lipid metabolism. Functionally, has cytotoxic activity: is able to induce apoptosis independently of its acyltransferase activity. This chain is Protein-glutamine gamma-glutamyltransferase 2, found in Homo sapiens (Human).